Here is a 366-residue protein sequence, read N- to C-terminus: Anthranilate phosphoribosyltransferase (366 aa).

Residues Gly103, 106-107 (GD), Thr111, 113-116 (NLST), 131-139 (KHGNRASSS), and Gly143 contribute to the 5-phospho-alpha-D-ribose 1-diphosphate site. Gly103 provides a ligand contact to anthranilate. Ser115 contacts Mg(2+). Residue Asn134 participates in anthranilate binding. Arg189 serves as a coordination point for anthranilate. Mg(2+) is bound by residues Asp247 and Glu248.

Belongs to the anthranilate phosphoribosyltransferase family. As to quaternary structure, homodimer. Requires Mg(2+) as cofactor.

It catalyses the reaction N-(5-phospho-beta-D-ribosyl)anthranilate + diphosphate = 5-phospho-alpha-D-ribose 1-diphosphate + anthranilate. Its pathway is amino-acid biosynthesis; L-tryptophan biosynthesis; L-tryptophan from chorismate: step 2/5. Catalyzes the transfer of the phosphoribosyl group of 5-phosphorylribose-1-pyrophosphate (PRPP) to anthranilate to yield N-(5'-phosphoribosyl)-anthranilate (PRA). This chain is Anthranilate phosphoribosyltransferase, found in Mycobacterium leprae (strain Br4923).